The chain runs to 210 residues: MLLDAIEARIIGCLLEKEVTTPDQYPLSLNALTLACNQKSSRAPVMDLSETQVQAGIDELTKKRLVSEQSGFGSRVVKYKHRFCNTEFSDLQLSSAQVAVLSLLLLRGPQTPGELRTRAGRQHDFKDIAEVEATLTALASRETPLVVQLPREPGKRESRFSLTIVEATTGMTTHSVASQVDERDDSRIAALEERVAQLEARLDALLLQTH.

The protein belongs to the UPF0502 family.

The sequence is that of UPF0502 protein Sama_1967 from Shewanella amazonensis (strain ATCC BAA-1098 / SB2B).